A 362-amino-acid polypeptide reads, in one-letter code: MKESLRLRLDQMVDRYEEVTALLSDPSVINDNNKFRELSVEHSDLMDITTLWQNYVGAETDQADAEAMLKEASDPDMKEMMQEEIDSARDTIVEMEEALNVMMLPKDPNDKVPAFLEIRAGTGGDEAAIFSGDLFRMYQKYAQAQGWTLEVLSANEGEHGGYKEIITRVSGNSVYGRLKFESGVHRVQRVPDTESQGRVHTSACTVAVMPEVEIDDTVNLNPADIRFDTFRSSGAGGQHVNTTDSAVRLTHIPTGTVVECQQERSQHKNRAQAMKMLISKIQQVKVQAQVDAADTIRRDLVGSGDRSERIRTYNFPQGRMTDHRINLTLYKLDSIMEGDLDEILDALLREHQADLMASVGGA.

The residue at position 238 (Gln-238) is an N5-methylglutamine.

Belongs to the prokaryotic/mitochondrial release factor family. In terms of processing, methylated by PrmC. Methylation increases the termination efficiency of RF1.

It localises to the cytoplasm. Its function is as follows. Peptide chain release factor 1 directs the termination of translation in response to the peptide chain termination codons UAG and UAA. The chain is Peptide chain release factor 1 from Psychrobacter arcticus (strain DSM 17307 / VKM B-2377 / 273-4).